Here is a 298-residue protein sequence, read N- to C-terminus: Protease HtpX homolog (298 aa).

2 consecutive transmembrane segments (helical) span residues 14–34 (ILVM…IGYL) and 39–59 (VIGG…VIIG). H144 contributes to the Zn(2+) binding site. The active site involves E145. H148 is a binding site for Zn(2+). Transmembrane regions (helical) follow at residues 159–179 (IALA…NFWW) and 195–215 (IFAI…ATIA). A Zn(2+)-binding site is contributed by E224.

Belongs to the peptidase M48B family. Requires Zn(2+) as cofactor.

It is found in the cell membrane. This chain is Protease HtpX homolog, found in Limosilactobacillus reuteri (strain DSM 20016) (Lactobacillus reuteri).